Reading from the N-terminus, the 415-residue chain is Zinc finger protein ZFMSA12A (415 aa).

A disordered region spans residues 1-36 (MGIQDARWPSEDEETHLLDSSSAEQTRGEKCSDSTP). C2H2-type zinc fingers lie at residues 78–100 (HKCT…QRLH), 106–129 (YRCS…RTQC), 134–156 (YICI…QCVH), 161–183 (FDCS…ELTH), 189–211 (FTCR…QKIH), 217–239 (NQCM…EVRH), 245–267 (QICA…MRSH), 273–295 (FQCT…VRTH), 301–323 (YLCS…RRTH), 329–351 (YKCS…MRVH), 357–379 (YVCS…SMNH), and 385–407 (YACQ…LKTH).

It is found in the nucleus. The polypeptide is Zinc finger protein ZFMSA12A (Micropterus salmoides (Largemouth bass)).